The primary structure comprises 600 residues: MAVSTQQLAEELQIFGLDCEDSLLEKLAELCTLYRQTEERMVSELIAFCTSAGKSCLTGEILSSFEHEVLNKKLSKACHSASKDNRHAGARDIVSIQELIEAEEEEETLLSAYTTPSKGPHKRVSSTPETPLTKRSISTRSPHQLLSPSSFSPSATPSQKYSSRTNRGEVVTTFGSAQGVSWSGRGGSGSISLKVMGYPEPLTSSYKTMFQQLPDIREVLTCKIEELGSELKEHYKIEAFTPLLVPAQEPVILLGQIGCDSNGRLNSKSVILEGDREHSSGAQIPVDVSELKDYSLFPGQVVIMEGFNTTGRRLTATKLYEGVPLPFYQPTEEEGDFEQTMVLVACGPYTTSDSITYDPLLDLISTINHDRPDVCILFGPFLDAKHEQVENCKLTSPFEDIFKQCLRTVIEGTRSSGSHLVFVPSLRDVHHEPVYPQPPFTFSELPREDKKRVQFVSEPCNLSINGVMFGLTSTDLLFHIGAEEICSSSGTSDRFSRILKHILTQRSYYPLYPPHEDMAIDYENFYTYAQLPVTPDVFIVPSELRYFVKDIFGCVCMNPGRLTKGQVGGTFGRLYLRRQPKGTDSEGRQGLSVAAQVVRI.

The disordered stretch occupies residues 112–167; it reads AYTTPSKGPHKRVSSTPETPLTKRSISTRSPHQLLSPSSFSPSATPSQKYSSRTNR. The span at 125 to 140 shows a compositional bias: polar residues; the sequence is SSTPETPLTKRSISTR. Phosphoserine is present on S126. 2 positions are modified to phosphothreonine: T127 and T130. A phosphoserine mark is found at S141, S147, S152, and S154. Residues 141-158 show a composition bias toward low complexity; sequence SPHQLLSPSSFSPSATPS.

The protein belongs to the DNA polymerase alpha subunit B family. Component of the alpha DNA polymerase complex (also known as the alpha DNA polymerase-primase complex) consisting of four subunits: the catalytic subunit POLA1, the regulatory subunit POLA2, and the primase complex subunits PRIM1 and PRIM2 respectively. Within the complex, POLA1 directly interacts with PRIM2. Post-translationally, phosphorylated in a cell cycle-dependent manner, in G2/M phase.

It is found in the nucleus. Accessory subunit of the DNA polymerase alpha complex (also known as the alpha DNA polymerase-primase complex) which plays an essential role in the initiation of DNA synthesis. During the S phase of the cell cycle, the DNA polymerase alpha complex (composed of a catalytic subunit POLA1, an accessory subunit POLA2 and two primase subunits, the catalytic subunit PRIM1 and the regulatory subunit PRIM2) is recruited to DNA at the replicative forks via direct interactions with MCM10 and WDHD1. The primase subunit of the polymerase alpha complex initiates DNA synthesis by oligomerising short RNA primers on both leading and lagging strands. These primers are initially extended by the polymerase alpha catalytic subunit and subsequently transferred to polymerase delta and polymerase epsilon for processive synthesis on the lagging and leading strand, respectively. The chain is DNA polymerase alpha subunit B (Pola2) from Rattus norvegicus (Rat).